Reading from the N-terminus, the 111-residue chain is Cytochrome c oxidase subunit 6A1, mitochondrial (111 aa).

The N-terminal 26 residues, 1–26 (MASAVLSASRVSGLLGRALPRVGRPM), are a transit peptide targeting the mitochondrion. Topologically, residues 27–36 (SSGAHGEEGS) are mitochondrial matrix. A helical membrane pass occupies residues 37–61 (ARIWKALTYFVALPGVGVSMLNVFL). The Mitochondrial intermembrane segment spans residues 62–111 (KSRHEEHERPEFVAYPHLRIRTKPFPWGDGNHTLFHNPHMNPLPTGYEDE).

The protein belongs to the cytochrome c oxidase subunit 6A family. In terms of assembly, component of the cytochrome c oxidase (complex IV, CIV), a multisubunit enzyme composed of 14 subunits. The complex is composed of a catalytic core of 3 subunits MT-CO1, MT-CO2 and MT-CO3, encoded in the mitochondrial DNA, and 11 supernumerary subunits COX4I, COX5A, COX5B, COX6A, COX6B, COX6C, COX7A, COX7B, COX7C, COX8 and NDUFA4, which are encoded in the nuclear genome. The complex exists as a monomer or a dimer and forms supercomplexes (SCs) in the inner mitochondrial membrane with NADH-ubiquinone oxidoreductase (complex I, CI) and ubiquinol-cytochrome c oxidoreductase (cytochrome b-c1 complex, complex III, CIII), resulting in different assemblies (supercomplex SCI(1)III(2)IV(1) and megacomplex MCI(2)III(2)IV(2)).

Its subcellular location is the mitochondrion inner membrane. The protein operates within energy metabolism; oxidative phosphorylation. Functionally, component of the cytochrome c oxidase, the last enzyme in the mitochondrial electron transport chain which drives oxidative phosphorylation. The respiratory chain contains 3 multisubunit complexes succinate dehydrogenase (complex II, CII), ubiquinol-cytochrome c oxidoreductase (cytochrome b-c1 complex, complex III, CIII) and cytochrome c oxidase (complex IV, CIV), that cooperate to transfer electrons derived from NADH and succinate to molecular oxygen, creating an electrochemical gradient over the inner membrane that drives transmembrane transport and the ATP synthase. Cytochrome c oxidase is the component of the respiratory chain that catalyzes the reduction of oxygen to water. Electrons originating from reduced cytochrome c in the intermembrane space (IMS) are transferred via the dinuclear copper A center (CU(A)) of subunit 2 and heme A of subunit 1 to the active site in subunit 1, a binuclear center (BNC) formed by heme A3 and copper B (CU(B)). The BNC reduces molecular oxygen to 2 water molecules unsing 4 electrons from cytochrome c in the IMS and 4 protons from the mitochondrial matrix. The chain is Cytochrome c oxidase subunit 6A1, mitochondrial (Cox6a1) from Rattus norvegicus (Rat).